We begin with the raw amino-acid sequence, 292 residues long: uncharacterized protein (292 aa).

The next 10 membrane-spanning stretches (helical) occupy residues 6-26 (LGII…KVGI), 32-52 (LLFS…ILFI), 68-88 (IIMS…GMQF), 94-114 (TSVL…FSLN), 123-143 (MGLV…MLNI), 147-167 (ALFG…ANVF), 182-202 (AWHL…FEAV), 214-234 (SLLF…FWVL), 242-262 (ASMA…LQLH), and 265-285 (ITIN…MNTF). EamA domains follow at residues 13 to 137 (LIWG…FIFG) and 159 to 285 (LSWG…MNTF).

This sequence belongs to the EamA transporter family.

The protein localises to the cell membrane. This is an uncharacterized protein from Bacillus subtilis (strain 168).